The sequence spans 588 residues: Adenine deaminase (588 aa).

The protein belongs to the metallo-dependent hydrolases superfamily. Adenine deaminase family. Homodimer. It depends on Mn(2+) as a cofactor.

It catalyses the reaction adenine + H2O + H(+) = hypoxanthine + NH4(+). The polypeptide is Adenine deaminase (Escherichia coli O157:H7 (strain EC4115 / EHEC)).